A 249-amino-acid polypeptide reads, in one-letter code: Probable transcriptional regulatory protein LBJ_0543 (249 aa).

Belongs to the TACO1 family.

It is found in the cytoplasm. This chain is Probable transcriptional regulatory protein LBJ_0543, found in Leptospira borgpetersenii serovar Hardjo-bovis (strain JB197).